The chain runs to 222 residues: Large ribosomal subunit protein bL20 (222 aa).

It belongs to the bacterial ribosomal protein bL20 family.

In terms of biological role, binds directly to 23S ribosomal RNA and is necessary for the in vitro assembly process of the 50S ribosomal subunit. It is not involved in the protein synthesizing functions of that subunit. The chain is Large ribosomal subunit protein bL20 (rplT) from Paenarthrobacter aurescens (strain TC1).